A 309-amino-acid polypeptide reads, in one-letter code: tRNA uridine(34) hydroxylase (309 aa).

Positions 130–224 (SDPDTIVIDT…YLEEVPQEES (95 aa)) constitute a Rhodanese domain. Cysteine 184 (cysteine persulfide intermediate) is an active-site residue.

The protein belongs to the TrhO family.

It carries out the reaction uridine(34) in tRNA + AH2 + O2 = 5-hydroxyuridine(34) in tRNA + A + H2O. Its function is as follows. Catalyzes oxygen-dependent 5-hydroxyuridine (ho5U) modification at position 34 in tRNAs. This Rhizobium johnstonii (strain DSM 114642 / LMG 32736 / 3841) (Rhizobium leguminosarum bv. viciae) protein is tRNA uridine(34) hydroxylase.